A 113-amino-acid chain; its full sequence is U11-theraphotoxin-Hhn1e (113 aa).

The signal sequence occupies residues 1–21; sequence MNTVRVTFLLVFVLAVSLGQA. A propeptide spanning residues 22–74 is cleaved from the precursor; sequence DKDENRMEMLEKTEQGKSYLDFAENLLLQKLEELEARLLEEDSEESRNSRQKR. Basic and acidic residues predominate over residues 60–69; the sequence is LEEDSEESRN. The segment at 60–87 is disordered; that stretch reads LEEDSEESRNSRQKRCIGEGVPRDENDP. 2 cysteine pairs are disulfide-bonded: C75/C90 and C89/C110.

This sequence belongs to the neurotoxin 14 (magi-1) family. 01 (HNTX-16) subfamily. Expressed by the venom gland.

It is found in the secreted. Probable ion channel inhibitor. The protein is U11-theraphotoxin-Hhn1e of Cyriopagopus hainanus (Chinese bird spider).